The sequence spans 192 residues: Pyridoxal 5'-phosphate synthase subunit PdxT (192 aa).

L-glutamine is bound at residue 53-55 (GES). The active-site Nucleophile is Cys-82. Residues Arg-109 and 137 to 138 (IR) each bind L-glutamine. Residues His-173 and Glu-175 each act as charge relay system in the active site.

It belongs to the glutaminase PdxT/SNO family. In the presence of PdxS, forms a dodecamer of heterodimers. Only shows activity in the heterodimer.

The enzyme catalyses aldehydo-D-ribose 5-phosphate + D-glyceraldehyde 3-phosphate + L-glutamine = pyridoxal 5'-phosphate + L-glutamate + phosphate + 3 H2O + H(+). It carries out the reaction L-glutamine + H2O = L-glutamate + NH4(+). The protein operates within cofactor biosynthesis; pyridoxal 5'-phosphate biosynthesis. Its function is as follows. Catalyzes the hydrolysis of glutamine to glutamate and ammonia as part of the biosynthesis of pyridoxal 5'-phosphate. The resulting ammonia molecule is channeled to the active site of PdxS. This chain is Pyridoxal 5'-phosphate synthase subunit PdxT, found in Methanoculleus marisnigri (strain ATCC 35101 / DSM 1498 / JR1).